A 566-amino-acid chain; its full sequence is Erythroid membrane-associated protein (566 aa).

The first 29 residues, 1 to 29 (MERPSPCGSWLVGCLFTIAVFQPPVQVLG), serve as a signal peptide directing secretion. An Ig-like V-type domain is found at 30–139 (DAGKVYIAPL…SSREDNVTLQ (110 aa)). Over 30–246 (DAGKVYIAPL…PERGSLSSPA (217 aa)) the chain is Extracellular. Cysteine 47 and cysteine 123 are oxidised to a cystine. Asparagine 135 and asparagine 214 each carry an N-linked (GlcNAc...) asparagine glycan. Residues 247 to 267 (VALSVVLPVLGLLILLGIWLI) traverse the membrane as a helical segment. At 268–566 (CKQKKSKEKL…ALKGLKVPSL (299 aa)) the chain is on the cytoplasmic side. The 199-residue stretch at 311 to 509 (KLKRAAANAG…LIICTELQKS (199 aa)) folds into the B30.2/SPRY domain. The residue at position 509 (serine 509) is a Phosphoserine.

Belongs to the immunoglobulin superfamily. BTN/MOG family. In terms of processing, glycosylated. Expressed in spleen and bone marrow.

The protein localises to the cell membrane. It localises to the cytoplasm. Its function is as follows. Possible role as a cell-adhesion or receptor molecule of erythroid cells. The chain is Erythroid membrane-associated protein (Ermap) from Mus musculus (Mouse).